Consider the following 79-residue polypeptide: Acyl carrier protein (79 aa).

In terms of domain architecture, Carrier spans 2–77; that stretch reads SEIGERVKKI…DATKFLEKNA (76 aa). An O-(pantetheine 4'-phosphoryl)serine modification is found at Ser-37.

Belongs to the acyl carrier protein (ACP) family. Post-translationally, 4'-phosphopantetheine is transferred from CoA to a specific serine of apo-ACP by AcpS. This modification is essential for activity because fatty acids are bound in thioester linkage to the sulfhydryl of the prosthetic group.

The protein resides in the cytoplasm. It functions in the pathway lipid metabolism; fatty acid biosynthesis. Carrier of the growing fatty acid chain in fatty acid biosynthesis. The sequence is that of Acyl carrier protein from Rhodopseudomonas palustris (strain HaA2).